The primary structure comprises 1123 residues: uncharacterized protein (1123 aa).

Disordered regions lie at residues Leu-136–Thr-229, Met-262–His-471, Leu-483–Leu-514, Lys-527–Asp-609, Ser-629–Ser-769, Leu-782–Ser-812, Ile-835–Asn-1005, and Asn-1070–Ile-1099. Residues Gly-166 to Leu-185 show a composition bias toward gly residues. Residues Asp-190–Val-199 show a composition bias toward acidic residues. The segment covering Ser-211–Asp-223 has biased composition (gly residues). The segment covering Met-262–Asn-322 has biased composition (low complexity). Polar residues predominate over residues Pro-329–Gln-343. Low complexity-rich tracts occupy residues Gln-344–Asn-387, Ser-397–Ser-464, Asn-489–Asn-499, Lys-527–Ser-548, and His-563–Gln-585. Polar residues predominate over residues Ser-590 to His-604. The segment covering Cys-632–Asn-646 has biased composition (basic and acidic residues). 2 stretches are compositionally biased toward low complexity: residues Asn-647 to Asn-707 and Ser-727 to Ser-769. Residues Ser-790 to Pro-799 show a composition bias toward polar residues. Low complexity-rich tracts occupy residues Ile-835–Ile-984 and Asn-1070–Asn-1098.

This is an uncharacterized protein from Dictyostelium discoideum (Social amoeba).